The following is a 660-amino-acid chain: tRNA 5-methylaminomethyl-2-thiouridine biosynthesis bifunctional protein MnmC (660 aa).

The tRNA (mnm(5)s(2)U34)-methyltransferase stretch occupies residues 1–241 (MNDHPAQDAF…KREILRGHLQ (241 aa)). Positions 268-660 (IGAGLAGCAT…FLLRKLIRGT (393 aa)) are FAD-dependent cmnm(5)s(2)U34 oxidoreductase.

In the N-terminal section; belongs to the methyltransferase superfamily. tRNA (mnm(5)s(2)U34)-methyltransferase family. This sequence in the C-terminal section; belongs to the DAO family. It depends on FAD as a cofactor.

Its subcellular location is the cytoplasm. The enzyme catalyses 5-aminomethyl-2-thiouridine(34) in tRNA + S-adenosyl-L-methionine = 5-methylaminomethyl-2-thiouridine(34) in tRNA + S-adenosyl-L-homocysteine + H(+). Its function is as follows. Catalyzes the last two steps in the biosynthesis of 5-methylaminomethyl-2-thiouridine (mnm(5)s(2)U) at the wobble position (U34) in tRNA. Catalyzes the FAD-dependent demodification of cmnm(5)s(2)U34 to nm(5)s(2)U34, followed by the transfer of a methyl group from S-adenosyl-L-methionine to nm(5)s(2)U34, to form mnm(5)s(2)U34. The protein is tRNA 5-methylaminomethyl-2-thiouridine biosynthesis bifunctional protein MnmC of Stutzerimonas stutzeri (strain A1501) (Pseudomonas stutzeri).